The sequence spans 714 residues: Sodium-dependent acetylcholine transporter (714 aa).

Positions 1–21 (MSVSSNDPEQRNGRGMASGNN) are disordered. Over 1 to 74 (MSVSSNDPEQ…GNWSNKSDYL (74 aa)) the chain is Cytoplasmic. 3 helical membrane passes run 75–95 (LAVIGFTAGVGSFWKFPFLVF), 100–120 (AAFLVPYLCMLCLASLPMFFM), and 152–172 (ISGFFAVFFNIISAWTLFYLI). The Extracellular portion of the chain corresponds to 173 to 257 (NSFSFSIPWS…LSKGVDDFGT (85 aa)). N-linked (GlcNAc...) asparagine glycosylation is found at N192, N205, N211, and N222. Helical transmembrane passes span 258–278 (LNWYLGLCVLACWIAVFLCLF), 287–307 (VVYVAVIVPFIILTVLLTRLL), 336–356 (AAVQAFYSVSCCSGGLFTIAS), 368–388 (IWLVLIVDVIVSLVGCLLTFS), 422–442 (AGVSVAPLYAGLFFIMILLVV), 476–496 (VCALFILLSIPFCLSSGLFWM), 502–522 (FVLTWPLVVIAFLECMAINWV), 548–568 (ILFKFICPMVYLAILCFLWLD), and 584–604 (ILTAWCIASFPLILIPIVGIW). Topologically, residues 605–714 (QFCIAKGTIT…IPKFERETAI (110 aa)) are cytoplasmic.

It belongs to the sodium:neurotransmitter symporter (SNF) (TC 2.A.22) family. Interacts with stn-1; part of the DGC. As to expression, body wall, and vulval and enteric muscles.

The protein resides in the cell membrane. Its subcellular location is the postsynaptic cell membrane. Functionally, mediates sodium-dependent uptake of acetylcholine at neuromuscular junctions during periods of increased synaptic activity, may also prevent spillover to adjacent synaptic sites. Not involved in the uptake of other neurotransmitters (GABA, glycine, proline and glutamate) and there was also no inhibition of uptake by adding an excess of other candidate substrates (GABA, glycine, taurine, creatine, proline, alanine, carnitine, glutamate and betaine). Required for muscle integrity; altered transport of acetylcholine due to loss of dystrophin-glycoprotein complex (DGC) function results in muscle degeneration. The chain is Sodium-dependent acetylcholine transporter from Caenorhabditis elegans.